Here is a 90-residue protein sequence, read N- to C-terminus: Acylphosphatase (90 aa).

Positions 5 to 90 (SYLFNVKGKV…WQELTDFKMY (86 aa)) constitute an Acylphosphatase-like domain. Active-site residues include arginine 20 and asparagine 38.

This sequence belongs to the acylphosphatase family.

It carries out the reaction an acyl phosphate + H2O = a carboxylate + phosphate + H(+). In Aliivibrio fischeri (strain ATCC 700601 / ES114) (Vibrio fischeri), this protein is Acylphosphatase (acyP).